We begin with the raw amino-acid sequence, 551 residues long: Arginine--tRNA ligase (551 aa).

The short motif at 125–135 is the 'HIGH' region element; sequence ANPTGPLHIGH.

It belongs to the class-I aminoacyl-tRNA synthetase family. Monomer.

The protein resides in the cytoplasm. The catalysed reaction is tRNA(Arg) + L-arginine + ATP = L-arginyl-tRNA(Arg) + AMP + diphosphate. The polypeptide is Arginine--tRNA ligase (Nitratidesulfovibrio vulgaris (strain DSM 19637 / Miyazaki F) (Desulfovibrio vulgaris)).